A 124-amino-acid chain; its full sequence is UPF0231 protein Shewana3_0655 (124 aa).

The protein belongs to the UPF0231 family.

The polypeptide is UPF0231 protein Shewana3_0655 (Shewanella sp. (strain ANA-3)).